The sequence spans 567 residues: Serine/threonine-protein kinase SSN3 (567 aa).

Residues 68 to 470 form the Protein kinase domain; sequence YEIIGYIAAG…AINALDHSYF (403 aa). 74-82 provides a ligand contact to ATP; it reads IAAGTYGKV. The interval 88 to 179 is disordered; that stretch reads RQSSKSSSST…RNSENTDNRR (92 aa). Positions 90-101 are enriched in low complexity; it reads SSKSSSSTGSDS. Polar residues-rich tracts occupy residues 102-122 and 133-150; these read LAQD…QNAG and PNSN…ELST. Basic and acidic residues predominate over residues 167-179; that stretch reads GDKRNSENTDNRR. Lys190 lines the ATP pocket. The Proton acceptor role is filled by Asp293. Over residues 546-556 the composition is skewed to low complexity; sequence AVSGNSSSQSS. Residues 546–567 are disordered; the sequence is AVSGNSSSQSSRNMEPMKKKRK.

It belongs to the protein kinase superfamily. CMGC Ser/Thr protein kinase family. CDC2/CDKX subfamily. In terms of assembly, component of the SRB8-11 complex, a regulatory module of the Mediator complex. Requires Mg(2+) as cofactor.

The protein localises to the nucleus. It catalyses the reaction L-seryl-[protein] + ATP = O-phospho-L-seryl-[protein] + ADP + H(+). The enzyme catalyses L-threonyl-[protein] + ATP = O-phospho-L-threonyl-[protein] + ADP + H(+). It carries out the reaction [DNA-directed RNA polymerase] + ATP = phospho-[DNA-directed RNA polymerase] + ADP + H(+). Component of the SRB8-11 complex. The SRB8-11 complex is a regulatory module of the Mediator complex which is itself involved in regulation of basal and activated RNA polymerase II-dependent transcription. The SRB8-11 complex may be involved in the transcriptional repression of a subset of genes regulated by Mediator. It may inhibit the association of the Mediator complex with RNA polymerase II to form the holoenzyme complex. The SRB8-11 complex phosphorylates the C-terminal domain (CTD) of the largest subunit of RNA polymerase II. The chain is Serine/threonine-protein kinase SSN3 (SSN3) from Candida glabrata (strain ATCC 2001 / BCRC 20586 / JCM 3761 / NBRC 0622 / NRRL Y-65 / CBS 138) (Yeast).